We begin with the raw amino-acid sequence, 371 residues long: Queuine tRNA-ribosyltransferase (371 aa).

Catalysis depends on Asp89, which acts as the Proton acceptor. Substrate is bound by residues 89 to 93, Asp143, Gln185, and Gly212; that span reads DSGGF. Residues 243–249 form an RNA binding region; that stretch reads GVGKPED. Residue Asp262 is the Nucleophile of the active site. The interval 267-271 is RNA binding; important for wobble base 34 recognition; that stretch reads TRNAR. Zn(2+) contacts are provided by Cys300, Cys302, Cys305, and His331.

This sequence belongs to the queuine tRNA-ribosyltransferase family. As to quaternary structure, homodimer. Within each dimer, one monomer is responsible for RNA recognition and catalysis, while the other monomer binds to the replacement base PreQ1. The cofactor is Zn(2+).

The enzyme catalyses 7-aminomethyl-7-carbaguanine + guanosine(34) in tRNA = 7-aminomethyl-7-carbaguanosine(34) in tRNA + guanine. Its pathway is tRNA modification; tRNA-queuosine biosynthesis. In terms of biological role, catalyzes the base-exchange of a guanine (G) residue with the queuine precursor 7-aminomethyl-7-deazaguanine (PreQ1) at position 34 (anticodon wobble position) in tRNAs with GU(N) anticodons (tRNA-Asp, -Asn, -His and -Tyr). Catalysis occurs through a double-displacement mechanism. The nucleophile active site attacks the C1' of nucleotide 34 to detach the guanine base from the RNA, forming a covalent enzyme-RNA intermediate. The proton acceptor active site deprotonates the incoming PreQ1, allowing a nucleophilic attack on the C1' of the ribose to form the product. After dissociation, two additional enzymatic reactions on the tRNA convert PreQ1 to queuine (Q), resulting in the hypermodified nucleoside queuosine (7-(((4,5-cis-dihydroxy-2-cyclopenten-1-yl)amino)methyl)-7-deazaguanosine). This Azotobacter vinelandii (strain DJ / ATCC BAA-1303) protein is Queuine tRNA-ribosyltransferase.